A 465-amino-acid polypeptide reads, in one-letter code: Ribulose bisphosphate carboxylase large chain (465 aa).

An N6,N6,N6-trimethyllysine modification is found at lysine 4. Asparagine 113 and threonine 163 together coordinate substrate. Lysine 165 (proton acceptor) is an active-site residue. Substrate is bound at residue lysine 167. Mg(2+) is bound by residues lysine 191, aspartate 193, and glutamate 194. At lysine 191 the chain carries N6-carboxylysine. Histidine 284 acts as the Proton acceptor in catalysis. Residues arginine 285, histidine 317, and serine 369 each contribute to the substrate site.

This sequence belongs to the RuBisCO large chain family. Type I subfamily. In terms of assembly, heterohexadecamer of 8 large chains and 8 small chains; disulfide-linked. The disulfide link is formed within the large subunit homodimers. The cofactor is Mg(2+). The disulfide bond which can form in the large chain dimeric partners within the hexadecamer appears to be associated with oxidative stress and protein turnover.

The protein localises to the plastid. It is found in the chloroplast. It carries out the reaction 2 (2R)-3-phosphoglycerate + 2 H(+) = D-ribulose 1,5-bisphosphate + CO2 + H2O. The enzyme catalyses D-ribulose 1,5-bisphosphate + O2 = 2-phosphoglycolate + (2R)-3-phosphoglycerate + 2 H(+). Functionally, ruBisCO catalyzes two reactions: the carboxylation of D-ribulose 1,5-bisphosphate, the primary event in carbon dioxide fixation, as well as the oxidative fragmentation of the pentose substrate in the photorespiration process. Both reactions occur simultaneously and in competition at the same active site. This chain is Ribulose bisphosphate carboxylase large chain, found in Idesia polycarpa (Iigiri tree).